We begin with the raw amino-acid sequence, 73 residues long: Acyl carrier protein homolog (73 aa).

Residues Met1–Ser72 enclose the Carrier domain. Ser32 carries the O-(pantetheine 4'-phosphoryl)serine modification.

In terms of processing, 4'-phosphopantetheine is transferred from CoA to a specific serine of the apo-ACP-like protein.

The protein operates within lipid metabolism; fatty acid biosynthesis. Carrier of the growing fatty acid chain in fatty acid biosynthesis. The polypeptide is Acyl carrier protein homolog (Mycoplasmopsis pulmonis (strain UAB CTIP) (Mycoplasma pulmonis)).